A 109-amino-acid chain; its full sequence is Probable endoribonuclease MazF5 (109 aa).

It belongs to the PemK/MazF family. As to quaternary structure, forms a complex with cognate antitoxin MazE5.

Toxic component of a type II toxin-antitoxin (TA) system. Upon expression in M.smegmatis inhibits colony formation. Its toxic effect is neutralized by coexpression with cognate antitoxin MazE5. Probably an endoribonuclease. The chain is Probable endoribonuclease MazF5 (mazF5) from Mycobacterium tuberculosis (strain ATCC 25618 / H37Rv).